We begin with the raw amino-acid sequence, 145 residues long: Lysozyme-like protein 4 (145 aa).

A signal peptide spans 1–19; sequence MQLYLVLLLISYLLTPIGA. The C-type lysozyme domain maps to 20 to 145; the sequence is SILGRCVVAK…LDRWLDGCEL (126 aa). Disulfide bonds link Cys-25-Cys-143, Cys-49-Cys-130, Cys-84-Cys-95, and Cys-91-Cys-109. Glu-54 is a catalytic residue.

This sequence belongs to the glycosyl hydrolase 22 family. Monomer. Expressed in the brain, lung, ovary, uterus and testis. In testis expressed in the germinal epithelium and on the maturing spermatozoa (at protein level).

Its subcellular location is the secreted. The protein localises to the cytoplasmic vesicle. It localises to the secretory vesicle. The protein resides in the acrosome. It is found in the cell projection. Its subcellular location is the cilium. The protein localises to the flagellum. May be involved in fertilization. Has no detectable bacteriolytic and lysozyme activities in vitro. The sequence is that of Lysozyme-like protein 4 (Lyzl4) from Rattus norvegicus (Rat).